We begin with the raw amino-acid sequence, 556 residues long: 2-succinyl-5-enolpyruvyl-6-hydroxy-3-cyclohexene-1-carboxylate synthase (556 aa).

This sequence belongs to the TPP enzyme family. MenD subfamily. In terms of assembly, homodimer. Requires Mg(2+) as cofactor. Mn(2+) serves as cofactor. The cofactor is thiamine diphosphate.

It carries out the reaction isochorismate + 2-oxoglutarate + H(+) = 5-enolpyruvoyl-6-hydroxy-2-succinyl-cyclohex-3-ene-1-carboxylate + CO2. It participates in quinol/quinone metabolism; 1,4-dihydroxy-2-naphthoate biosynthesis; 1,4-dihydroxy-2-naphthoate from chorismate: step 2/7. Its pathway is quinol/quinone metabolism; menaquinone biosynthesis. Its function is as follows. Catalyzes the thiamine diphosphate-dependent decarboxylation of 2-oxoglutarate and the subsequent addition of the resulting succinic semialdehyde-thiamine pyrophosphate anion to isochorismate to yield 2-succinyl-5-enolpyruvyl-6-hydroxy-3-cyclohexene-1-carboxylate (SEPHCHC). This is 2-succinyl-5-enolpyruvyl-6-hydroxy-3-cyclohexene-1-carboxylate synthase from Escherichia fergusonii (strain ATCC 35469 / DSM 13698 / CCUG 18766 / IAM 14443 / JCM 21226 / LMG 7866 / NBRC 102419 / NCTC 12128 / CDC 0568-73).